Here is a 448-residue protein sequence, read N- to C-terminus: Tubulin beta chain (448 aa).

Glutamine 11, glutamate 69, serine 138, glycine 142, threonine 143, glycine 144, asparagine 204, and asparagine 226 together coordinate GTP. Glutamate 69 serves as a coordination point for Mg(2+). Residues 429–448 (GIDEGDEDYEIEEEKEPLEY) form a disordered region.

It belongs to the tubulin family. In terms of assembly, dimer of alpha and beta chains. A typical microtubule is a hollow water-filled tube with an outer diameter of 25 nm and an inner diameter of 15 nM. Alpha-beta heterodimers associate head-to-tail to form protofilaments running lengthwise along the microtubule wall with the beta-tubulin subunit facing the microtubule plus end conferring a structural polarity. Microtubules usually have 13 protofilaments but different protofilament numbers can be found in some organisms and specialized cells. Mg(2+) is required as a cofactor.

The protein resides in the cytoplasm. Its subcellular location is the cytoskeleton. Its function is as follows. Tubulin is the major constituent of microtubules, a cylinder consisting of laterally associated linear protofilaments composed of alpha- and beta-tubulin heterodimers. Microtubules grow by the addition of GTP-tubulin dimers to the microtubule end, where a stabilizing cap forms. Below the cap, tubulin dimers are in GDP-bound state, owing to GTPase activity of alpha-tubulin. In Schizosaccharomyces pombe (strain 972 / ATCC 24843) (Fission yeast), this protein is Tubulin beta chain (nda3).